The sequence spans 967 residues: RNA polymerase-associated protein RapA (967 aa).

A Helicase ATP-binding domain is found at 163–332 (EVGRRHAPRV…FARLRLLDPD (170 aa)). 176-183 (DEVGLGKT) lines the ATP pocket. The short motif at 278–281 (DEAH) is the DEAH box element. The Helicase C-terminal domain occupies 491 to 639 (RVDWLIDFLK…LCAFELTCPG (149 aa)).

The protein belongs to the SNF2/RAD54 helicase family. RapA subfamily. In terms of assembly, interacts with the RNAP. Has a higher affinity for the core RNAP than for the holoenzyme. Its ATPase activity is stimulated by binding to RNAP.

Its function is as follows. Transcription regulator that activates transcription by stimulating RNA polymerase (RNAP) recycling in case of stress conditions such as supercoiled DNA or high salt concentrations. Probably acts by releasing the RNAP, when it is trapped or immobilized on tightly supercoiled DNA. Does not activate transcription on linear DNA. Probably not involved in DNA repair. This is RNA polymerase-associated protein RapA from Shewanella amazonensis (strain ATCC BAA-1098 / SB2B).